Consider the following 122-residue polypeptide: Cytochrome c-556 (122 aa).

Residues M11, C111, C114, and H115 each contribute to the heme site. 4 residues coordinate heme c: M11, C111, C114, and H115.

In terms of assembly, monomer. Post-translationally, binds 1 heme c group covalently per subunit.

In terms of biological role, low-spin monoheme cytochrome c. In Agrobacterium tumefaciens (strain B2A), this protein is Cytochrome c-556.